Here is a 276-residue protein sequence, read N- to C-terminus: UPF0276 protein AM1_3026 (276 aa).

This sequence belongs to the UPF0276 family.

This chain is UPF0276 protein AM1_3026, found in Acaryochloris marina (strain MBIC 11017).